The chain runs to 823 residues: Mitochondrial intermediate peptidase 2 (823 aa).

A mitochondrion-targeting transit peptide spans 1 to 33 (MRRLQQSLRRRSARRCPFILIPHRLLTTSYASY). The interval 532-553 (IDGDGLPEDWDKPYGPGLEADK) is disordered. Residue H595 coordinates Zn(2+). Residue E596 is part of the active site. 2 residues coordinate Zn(2+): H599 and H602.

Belongs to the peptidase M3 family. It depends on Zn(2+) as a cofactor.

It localises to the mitochondrion matrix. The catalysed reaction is Release of an N-terminal octapeptide as second stage of processing of some proteins imported into the mitochondrion.. Cleaves proteins, imported into the mitochondrion, to their mature size. While most mitochondrial precursor proteins are processed to the mature form in one step by mitochondrial processing peptidase (MPP), the sequential cleavage by MIP of an octapeptide after initial processing by MPP is a required step for a subgroup of nuclear-encoded precursor proteins destined for the matrix or the inner membrane. The polypeptide is Mitochondrial intermediate peptidase 2 (OCT2) (Cryptococcus neoformans var. neoformans serotype D (strain B-3501A) (Filobasidiella neoformans)).